Consider the following 162-residue polypeptide: Peroxiredoxin-2C (162 aa).

One can recognise a Thioredoxin domain in the interval 4–162 (ITVGDVVPDG…SSAEDILKAL (159 aa)). The active-site Cysteine sulfenic acid (-SOH) intermediate is the Cys51.

Belongs to the peroxiredoxin family. Prx5 subfamily. In terms of assembly, monomer. As to expression, highly expressed in buds and flowers. Slightly expressed in green tissues. Also detected in pollen.

The protein resides in the cytoplasm. It catalyses the reaction [glutaredoxin]-dithiol + a hydroperoxide = [glutaredoxin]-disulfide + an alcohol + H2O. Thiol-specific peroxidase that catalyzes the reduction of hydrogen peroxide and organic hydroperoxides to water and alcohols, respectively. Plays a role in cell protection against oxidative stress by detoxifying peroxides and as sensor of hydrogen peroxide-mediated signaling events. This chain is Peroxiredoxin-2C (PRXIIC), found in Arabidopsis thaliana (Mouse-ear cress).